Reading from the N-terminus, the 442-residue chain is Tyrosine-protein kinase transforming protein RYK (442 aa).

In terms of domain architecture, Protein kinase spans leucine 45 to leucine 316. ATP is bound by residues leucine 51–valine 59 and lysine 77. Aspartate 181 acts as the Proton acceptor in catalysis. Tyrosine 212 bears the Phosphotyrosine; by autocatalysis mark.

This sequence belongs to the protein kinase superfamily. Tyr protein kinase family. AXL/UFO subfamily.

It localises to the host cell membrane. It carries out the reaction L-tyrosyl-[protein] + ATP = O-phospho-L-tyrosyl-[protein] + ADP + H(+). The chain is Tyrosine-protein kinase transforming protein RYK (V-RYK) from Avian retrovirus RPL30.